The sequence spans 342 residues: P2Y purinoceptor 12 (342 aa).

Residues methionine 1–leucine 27 lie on the Extracellular side of the membrane. N-linked (GlcNAc...) asparagine glycosylation is found at asparagine 6 and asparagine 13. Cystine bridges form between cysteine 17–cysteine 270 and cysteine 97–cysteine 175. The helical transmembrane segment at phenylalanine 28 to phenylalanine 50 threads the bilayer. The Cytoplasmic segment spans residues phenylalanine 51–isoleucine 61. 2 positions are modified to phosphoserine: serine 55 and serine 57. Residues phenylalanine 62–leucine 82 form a helical membrane-spanning segment. At serine 83 to cysteine 97 the chain is on the extracellular side. Positions 93, 97, and 105 each coordinate ADP. The chain crosses the membrane as a helical span at residues glutamine 98–isoleucine 118. The Cytoplasmic segment spans residues threonine 119 to lysine 142. Residues isoleucine 143–leucine 162 form a helical membrane-spanning segment. Residues serine 156 to asparagine 159, cysteine 175 to lysine 179, histidine 187, and asparagine 191 each bind ADP. Over threonine 163–valine 185 the chain is Extracellular. A helical transmembrane segment spans residues tryptophan 186–valine 207. At cysteine 208–lysine 233 the chain is on the cytoplasmic side. The chain crosses the membrane as a helical span at residues valine 234 to tyrosine 259. ADP contacts are provided by residues arginine 256–tyrosine 259, glutamine 263, and lysine 280. The Extracellular portion of the chain corresponds to threonine 260 to tyrosine 278. A helical membrane pass occupies residues valine 279–tyrosine 298. The Cytoplasmic segment spans residues phenylalanine 299 to methionine 342. A disordered region spans residues asparagine 317–methionine 342. The span at glycine 333 to methionine 342 shows a compositional bias: acidic residues.

The protein belongs to the G-protein coupled receptor 1 family.

It is found in the cell membrane. Receptor for ADP and ATP coupled to G-proteins that inhibit the adenylyl cyclase second messenger system. Required for normal platelet aggregation and blood coagulation. This chain is P2Y purinoceptor 12 (P2RY12), found in Macaca fascicularis (Crab-eating macaque).